The chain runs to 102 residues: Alpha-hemoglobin-stabilizing protein (102 aa).

It belongs to the AHSP family. In terms of assembly, monomer. Forms a heterodimer with free alpha-hemoglobin. Does not bind beta-hemoglobin nor alpha(2)beta(2) hemoglobin A. As to expression, expressed in spleen, bone marrow, and blood, with highest levels in bone marrow.

Its subcellular location is the cytoplasm. In terms of biological role, acts as a chaperone to prevent the harmful aggregation of alpha-hemoglobin during normal erythroid cell development. Specifically protects free alpha-hemoglobin from precipitation. This is Alpha-hemoglobin-stabilizing protein (Ahsp) from Mus musculus (Mouse).